The primary structure comprises 49 residues: Delta-actitoxin-Axm1b (49 aa).

Positions 1–7 (GVPCLCD) are well-structured region. 3 cysteine pairs are disulfide-bonded: C4/C46, C6/C36, and C29/C47. Residues 8-17 (SDGPRPRGNT) form an arg-14 loop (non-well-structured region) region. The tract at residues 18–49 (LSGILWFYPSGCPSGWHNCKAHGPNIGWCCKK) is well-structured region.

This sequence belongs to the sea anemone sodium channel inhibitory toxin family. Type I subfamily.

It is found in the secreted. The protein resides in the nematocyst. In terms of biological role, binds specifically to voltage-gated sodium channels (Nav) (site 3), thereby delaying their inactivation. This toxin has the highest affinity of all anemone toxins for the mammalian sodium channel, whereas its paralog Anthopleurin-A retains the greatest capacity to discriminate between cardiac (Nav1.5/SCN5A) and neuronal sodium channels. When tested electrophysiologically, this toxin exhibits a high affinity for multiple sodium channels with a 50-fold preference for rat cardiac (Nav1.5/SCN5A) over neuronal channels (0.1 nM versus 5 nM). When tested by ion flux, the affinities are similar and appear to have higher affinity (9 nM versus 22 nM). The residue Lys-37 of this toxin has been shown to interact with channel Nav1.5 (residue Asp-1612 in rat and Asp-1610 in human), which is located in the DIV S3-S4 linker (corresponding to channel site 3). Selectively modifies sodium channel inactivation from the open state with little effect on channel activation or on inactivation from closed states. Does not display phospholipid-binding activities, suggesting that the domain IV S3-S4 linker is located at the extracellular surface and not buried in the phospholipid bilayer. The chain is Delta-actitoxin-Axm1b from Anthopleura xanthogrammica (Giant green sea anemone).